A 305-amino-acid chain; its full sequence is UDP-3-O-acyl-N-acetylglucosamine deacetylase (305 aa).

Residues His79, His238, and Asp242 each coordinate Zn(2+). The Proton donor role is filled by His265.

The protein belongs to the LpxC family. Zn(2+) serves as cofactor.

The catalysed reaction is a UDP-3-O-[(3R)-3-hydroxyacyl]-N-acetyl-alpha-D-glucosamine + H2O = a UDP-3-O-[(3R)-3-hydroxyacyl]-alpha-D-glucosamine + acetate. Its pathway is glycolipid biosynthesis; lipid IV(A) biosynthesis; lipid IV(A) from (3R)-3-hydroxytetradecanoyl-[acyl-carrier-protein] and UDP-N-acetyl-alpha-D-glucosamine: step 2/6. In terms of biological role, catalyzes the hydrolysis of UDP-3-O-myristoyl-N-acetylglucosamine to form UDP-3-O-myristoylglucosamine and acetate, the committed step in lipid A biosynthesis. This Haemophilus influenzae (strain 86-028NP) protein is UDP-3-O-acyl-N-acetylglucosamine deacetylase.